We begin with the raw amino-acid sequence, 81 residues long: Acyl carrier protein (81 aa).

The Carrier domain maps to 2–80 (ASKDEILAGL…DAVNFIDNAQ (79 aa)). Ser-40 is modified (O-(pantetheine 4'-phosphoryl)serine).

This sequence belongs to the acyl carrier protein (ACP) family. 4'-phosphopantetheine is transferred from CoA to a specific serine of apo-ACP by AcpS. This modification is essential for activity because fatty acids are bound in thioester linkage to the sulfhydryl of the prosthetic group.

It localises to the cytoplasm. The protein operates within lipid metabolism; fatty acid biosynthesis. Functionally, carrier of the growing fatty acid chain in fatty acid biosynthesis. The sequence is that of Acyl carrier protein from Kocuria rhizophila (strain ATCC 9341 / DSM 348 / NBRC 103217 / DC2201).